Consider the following 572-residue polypeptide: Probable inactive glycosyltransferase 25 family member 3 (572 aa).

N-linked (GlcNAc...) asparagine glycans are attached at residues asparagine 52, asparagine 130, asparagine 214, and asparagine 337. A Prevents secretion from ER motif is present at residues 569–572; it reads RDEL.

It belongs to the glycosyltransferase 25 family.

It localises to the endoplasmic reticulum lumen. Functionally, probable cell adhesion protein involved in leukocyte transmigration across the blood-brain barrier. Does not express any beta-galactosyltransferase activity in vitro. This Rattus norvegicus (Rat) protein is Probable inactive glycosyltransferase 25 family member 3 (Cercam).